The chain runs to 612 residues: 1,8-cineole synthase, chloroplastic (612 aa).

Residues 1 to 52 constitute a chloroplast transit peptide; that stretch reads MALVCGAPLASRSCLNKSLISSTHELKPLRRTILPTLRWKSATPSINMCLTT. Residues aspartate 363, aspartate 367, and aspartate 515 each coordinate Mg(2+). The DDXXD motif signature appears at 363 to 367; sequence DDIYD.

It belongs to the terpene synthase family. Tpsd subfamily. The cofactor is Mg(2+). It depends on Mn(2+) as a cofactor.

Its subcellular location is the plastid. The protein resides in the chloroplast. The enzyme catalyses (2E)-geranyl diphosphate + H2O = 1,8-cineole + diphosphate. The protein operates within terpene metabolism; oleoresin biosynthesis. Its function is as follows. Terpene synthase (TPS) involved in the biosynthesis of monoterpene natural products included in conifer oleoresin secretions and volatile emissions; these compounds contribute to biotic and abiotic stress defense against herbivores and pathogens. Catalyzes the conversion of (2E)-geranyl diphosphate (GPP) to 1,8-cineole. The chain is 1,8-cineole synthase, chloroplastic from Picea glauca (White spruce).